Here is a 175-residue protein sequence, read N- to C-terminus: Electron transport protein HydN (175 aa).

4Fe-4S ferredoxin-type domains lie at 2–32 (NRFI…NQDC), 48–79 (KGVN…SRDK), 80–109 (GFVH…VVVR), and 124–157 (DKAE…CVDR). [4Fe-4S] cluster contacts are provided by Cys-12, Cys-15, Cys-18, Cys-22, Cys-58, Cys-61, Cys-66, Cys-70, Cys-89, Cys-92, Cys-95, Cys-99, Cys-131, Cys-134, Cys-143, and Cys-147.

It depends on [4Fe-4S] cluster as a cofactor.

In terms of biological role, electron transport from formate to hydrogen. This Escherichia coli O157:H7 protein is Electron transport protein HydN (hydN).